A 180-amino-acid polypeptide reads, in one-letter code: Uterocalin (180 aa).

An N-terminal signal peptide occupies residues 1 to 18 (MNLLLLAMGLILPRRPHA). A disulfide bridge connects residues C82 and C175. N-linked (GlcNAc...) asparagine glycosylation occurs at N101.

Belongs to the calycin superfamily. Lipocalin family. As to expression, expressed in glandular and lumenal epithelia of the endometrium. Is transferred to the embryonic capsule, the conceptus and the yolk sac.

It is found in the secreted. Functionally, binds fatty acids and retinol. Is specialized for the preattachment embryo. May be important to maintain the pregnancy and may transport small hydrophobic ligands from mother to the developing embryo. The protein is Uterocalin of Equus caballus (Horse).